Here is a 663-residue protein sequence, read N- to C-terminus: Polyunsaturated fatty acid lipoxygenase ALOX12 (663 aa).

One can recognise a PLAT domain in the interval 2–114 (GRYRIRVATG…ILSLPEGTAR (113 aa)). The Lipoxygenase domain occupies 115 to 663 (LPGDNALDMF…PSCIENSVTI (549 aa)). The residue at position 246 (serine 246) is a Phosphoserine. Histidine 360, histidine 365, histidine 540, asparagine 544, and isoleucine 663 together coordinate Fe cation.

It belongs to the lipoxygenase family. It depends on Fe cation as a cofactor. In terms of tissue distribution, expressed in vascular smooth muscle cells.

The protein resides in the cytoplasm. It localises to the cytosol. The protein localises to the membrane. The enzyme catalyses (5Z,8Z,11Z,14Z)-eicosatetraenoate + O2 = (12S)-hydroperoxy-(5Z,8Z,10E,14Z)-eicosatetraenoate. The catalysed reaction is (5Z,8Z,11Z,14Z)-eicosatetraenoate + O2 = (15S)-hydroperoxy-(5Z,8Z,11Z,13E)-eicosatetraenoate. It catalyses the reaction 2 leukotriene A4 + O2 + 2 H2O = 2 lipoxin A4. It carries out the reaction 2 leukotriene A4 + O2 + 2 H2O = 2 lipoxin B4. The enzyme catalyses (14S)-hydroperoxy-(4Z,7Z,10Z,12E,16Z,19Z)-docosahexaenoate = (13S,14S)-epoxy-(4Z,7Z,9E,11E,16Z,19Z)-docosahexaenoate + H2O. The catalysed reaction is N-(5Z,8Z,11Z,14Z)-eicosatetraenoyl-L-alanine + O2 = N-(15S)-hydroperoxy-(5Z,8Z,11Z,13E)-eicosatetraenoyl-alanine. It catalyses the reaction N-(5Z,8Z,11Z,14Z)-eicosatetraenoyl-L-alanine + O2 = N-(12S)-hydroperoxy-(5Z,8Z,10E,14Z)-eicosatetraenoyl-alanine. It carries out the reaction N-(5Z,8Z,11Z,14Z)-eicosatetraenoyl-gamma-aminobutanoate + O2 = N-(15S)-hydroperoxy-(5Z,8Z,11Z,13E)-eicosatetraenoyl-gamma-aminobutanoate. The enzyme catalyses N-(5Z,8Z,11Z,14Z)-eicosatetraenoyl-gamma-aminobutanoate + O2 = N-(12S)-hydroperoxy-(5Z,8Z,10E,14Z)-eicosatetraenoyl-gamma-aminobutanoate. The catalysed reaction is N-(5Z,8Z,11Z,14Z)-eicosatetraenoyl-glycine + O2 = N-(15S)-hydroperoxy-(5Z,8Z,11Z,13E)-eicosatetraenoyl-glycine. It catalyses the reaction N-(5Z,8Z,11Z,14Z)-eicosatetraenoyl-glycine + O2 = N-(12S)-hydroperoxy-(5Z,8Z,10E,14Z)-eicosatetraenoyl-glycine. It carries out the reaction N-(5Z,8Z,11Z,14Z)-eicosatetraenoyl-taurine + O2 = N-(12S)-hydroperoxy-(5Z,8Z,10E,14Z)-eicosatetraenoyl-taurine. The enzyme catalyses N-(5Z,8Z,11Z,14Z)-eicosatetraenoyl-taurine + O2 = N-(15S)-hydroperoxy-(5Z,8Z,11Z,13E)-eicosatetraenoyl-taurine. The catalysed reaction is (4Z,7Z,10Z,13Z,16Z,19Z)-docosahexaenoate + O2 = (14S)-hydroperoxy-(4Z,7Z,10Z,12E,16Z,19Z)-docosahexaenoate. It catalyses the reaction (7S)-hydroperoxy-(4Z,8E,10Z,13Z,16Z,19Z)-docosahexaenoate + O2 = (7S,14S)-dihydroperoxy-(4Z,8E,10Z,12E,16Z,19Z)-docosahexaenoate. It carries out the reaction (7S)-hydroperoxy-(4Z,8E,10Z,13Z,16Z,19Z)-docosahexaenoate + O2 = (7S,17S)-dihydroperoxy-(4Z,8E,10Z,13Z,15E,19Z)-docosahexaenoate. The enzyme catalyses (5Z,8Z,11Z,14Z,17Z)-eicosapentaenoate + O2 = (12S)-hydroperoxy-(5Z,8Z,10E,14Z,17Z)-eicosapentaenoate. The catalysed reaction is (8Z,11Z,14Z)-eicosatrienoate + O2 = (12S)-hydroperoxy-(8Z,10E,14Z)-eicosatrienoate. It catalyses the reaction (9Z,12Z)-octadecadienoate + O2 = (13S)-hydroperoxy-(9Z,11E)-octadecadienoate. It carries out the reaction (5Z,8Z,11Z)-eicosatrienoate + O2 = (12S)-hydroperoxy-(5Z,8Z,10E)-eicosatrienoate. The enzyme catalyses (14R,15S)-epoxy-(5Z,8Z,11Z)-eicosatrienoate + O2 = (12S)-hydroperoxy-(14R,15S)-epoxy-(5Z,8Z,10E)-eicosatrienoate. The catalysed reaction is (14S,15R)-epoxy-(5Z,8Z,11Z)-eicosatrienoate + O2 = (12S)-hydroperoxy-(14S,15R)-epoxy-(5Z,8Z,10E)-eicosatrienoate. The protein operates within lipid metabolism; hydroperoxy eicosatetraenoic acid biosynthesis. Its activity is regulated as follows. Activated by EGF. Arachidonic acid conversion is inhibited by (13S,14S)-epoxy-(4Z,7Z,9E,11E,16Z,19Z)-docosahexaenoate (13S,14S-epoxy-DHA). Arachidonate 12-lipoxygenase activity is decreased when PH decreases from 7.4 to 6. In terms of biological role, catalyzes the regio and stereo-specific incorporation of molecular oxygen into free and esterified polyunsaturated fatty acids generating lipid hydroperoxides that can be further reduced to the corresponding hydroxy species. Mainly converts arachidonate ((5Z,8Z,11Z,14Z)-eicosatetraenoate) to the specific bioactive lipid (12S)-hydroperoxyeicosatetraenoate/(12S)-HPETE. Through the production of bioactive lipids like (12S)-HPETE it regulates different biological processes including platelet activation. It can also catalyze the epoxidation of double bonds of polyunsaturated fatty acids such as (14S)-hydroperoxy-docosahexaenoate/(14S)-HPDHA resulting in the formation of (13S,14S)-epoxy-DHA. Furthermore, it may participate in the sequential oxidations of DHA ((4Z,7Z,10Z,13Z,16Z,19Z)-docosahexaenoate) to generate specialized pro-resolving mediators (SPMs) like resolvin D5 ((7S,17S)-diHPDHA) and (7S,14S)-diHPDHA, that actively down-regulate the immune response and have anti-aggregation properties with platelets. An additional function involves a multistep process by which it transforms leukotriene A4/LTA4 into the bioactive lipids lipoxin A4/LXA4 and lipoxin B4/LXB4, both are vasoactive and LXA4 may regulate neutrophil function via occupancy of specific recognition sites. Can also peroxidize linoleate ((9Z,12Z)-octadecadienoate) to (13S)-hydroperoxyoctadecadienoate/ (13S-HPODE). Due to its role in regulating both the expression of the vascular endothelial growth factor (VEGF, an angiogenic factor involved in the survival and metastasis of solid tumors) and the expression of integrin beta-1 (known to affect tumor cell migration and proliferation), it can be regarded as protumorigenic. Important for cell survival, as it may play a role not only in proliferation but also in the prevention of apoptosis in vascular smooth muscle cells. This chain is Polyunsaturated fatty acid lipoxygenase ALOX12, found in Homo sapiens (Human).